The following is a 354-amino-acid chain: Rhodopsin (354 aa).

Over 1–36 (MNGTEGENFYVPMSNKTGVVRSPFDYPQYYLGEPWM) the chain is Extracellular. N2 and N15 each carry an N-linked (GlcNAc...) asparagine glycan. The chain crosses the membrane as a helical span at residues 37–61 (FSALAAYMFFLILTGLPVNFLTLFV). Topologically, residues 62–73 (TIQHKKLRQPLN) are cytoplasmic. The helical transmembrane segment at 74 to 96 (YILLNLAVSDLFMVFGGFTTTII) threads the bilayer. Residues 97-110 (TSMNGYFIFGPAGC) are Extracellular-facing. Residues C110 and C187 are joined by a disulfide bond. The helical transmembrane segment at 111–133 (NFEGFFATLGGEVGLWCLVVLAI) threads the bilayer. Positions 134–136 (ERY) match the 'Ionic lock' involved in activated form stabilization motif. At 134–152 (ERYMVVCKPMANFRFGSQH) the chain is on the cytoplasmic side. Residues 153–173 (AIIGVVFTWIMALSCAGPPLV) form a helical membrane-spanning segment. Residues 174 to 202 (GWSRYIPEGLQCSCGVDYYTMKPEVNNES) are Extracellular-facing. The helical transmembrane segment at 203 to 224 (FVIYMFVVHFTIPLIVIFFCYG) threads the bilayer. Residues 225-252 (RLVCTVKEAAAQQQESESTQRAEREVTR) lie on the Cytoplasmic side of the membrane. The chain crosses the membrane as a helical span at residues 253–274 (MVIIMVVAFLICWVPYASVAFY). The Extracellular portion of the chain corresponds to 275 to 286 (IFINQGCDFTPF). Residues 287-308 (FMTVPAFFAKSSAVYNPLIYIL) form a helical membrane-spanning segment. K296 carries the N6-(retinylidene)lysine modification. Residues 309–354 (MNKQFRNCMITTICLGKNPFEEEESTSASASKTEASSVSSSQVAPA) lie on the Cytoplasmic side of the membrane. C322 carries S-palmitoyl cysteine lipidation. Residues 333–354 (STSASASKTEASSVSSSQVAPA) are disordered. Over residues 334–354 (TSASASKTEASSVSSSQVAPA) the composition is skewed to low complexity.

This sequence belongs to the G-protein coupled receptor 1 family. Opsin subfamily. Post-translationally, phosphorylated on some or all of the serine and threonine residues present in the C-terminal region. In terms of processing, contains one covalently linked retinal chromophore.

It localises to the membrane. Its subcellular location is the cell projection. It is found in the cilium. The protein localises to the photoreceptor outer segment. In terms of biological role, photoreceptor required for image-forming vision at low light intensity. While most salt water fish species use retinal as chromophore, most freshwater fish use 3-dehydroretinal, or a mixture of retinal and 3-dehydroretinal. Light-induced isomerization of 11-cis to all-trans retinal triggers a conformational change that activates signaling via G-proteins. Subsequent receptor phosphorylation mediates displacement of the bound G-protein alpha subunit by arrestin and terminates signaling. This Leucoraja erinaceus (Little skate) protein is Rhodopsin (rho).